Consider the following 437-residue polypeptide: Enolase (437 aa).

Residue Q162 participates in (2R)-2-phosphoglycerate binding. E204 functions as the Proton donor in the catalytic mechanism. 3 residues coordinate Mg(2+): D251, E297, and D324. Residues K349, R378, S379, and K400 each coordinate (2R)-2-phosphoglycerate. K349 functions as the Proton acceptor in the catalytic mechanism.

Belongs to the enolase family. Mg(2+) is required as a cofactor.

The protein localises to the cytoplasm. The protein resides in the secreted. Its subcellular location is the cell surface. It carries out the reaction (2R)-2-phosphoglycerate = phosphoenolpyruvate + H2O. It participates in carbohydrate degradation; glycolysis; pyruvate from D-glyceraldehyde 3-phosphate: step 4/5. Functionally, catalyzes the reversible conversion of 2-phosphoglycerate (2-PG) into phosphoenolpyruvate (PEP). It is essential for the degradation of carbohydrates via glycolysis. The chain is Enolase from Chlorobium phaeovibrioides (strain DSM 265 / 1930) (Prosthecochloris vibrioformis (strain DSM 265)).